We begin with the raw amino-acid sequence, 867 residues long: Protein melted homolog (867 aa).

A disordered region spans residues 480–505 (MPSSSRTNVHLSQAASSSRGHSLPQT). In terms of domain architecture, PH spans 753–860 (EKVLEGQLKE…WLHCLQIAMA (108 aa)).

This sequence belongs to the MELT/VEPH family.

The protein localises to the cell membrane. The sequence is that of Protein melted homolog from Caenorhabditis briggsae.